We begin with the raw amino-acid sequence, 137 residues long: uncharacterized protein (137 aa).

This is an uncharacterized protein from Mycoplasma genitalium (strain ATCC 33530 / DSM 19775 / NCTC 10195 / G37) (Mycoplasmoides genitalium).